The following is a 195-amino-acid chain: Imidazoleglycerol-phosphate dehydratase (195 aa).

Belongs to the imidazoleglycerol-phosphate dehydratase family.

It is found in the cytoplasm. The enzyme catalyses D-erythro-1-(imidazol-4-yl)glycerol 3-phosphate = 3-(imidazol-4-yl)-2-oxopropyl phosphate + H2O. Its pathway is amino-acid biosynthesis; L-histidine biosynthesis; L-histidine from 5-phospho-alpha-D-ribose 1-diphosphate: step 6/9. The protein is Imidazoleglycerol-phosphate dehydratase of Bordetella petrii (strain ATCC BAA-461 / DSM 12804 / CCUG 43448).